The sequence spans 473 residues: Cysteine--tRNA ligase (473 aa).

Cys-30 contributes to the Zn(2+) binding site. The 'HIGH' region motif lies at 32 to 42; it reads MTVYDYCHIGH. The Zn(2+) site is built by Cys-213, His-238, and Glu-242. The 'KMSKS' region motif lies at 270-274; that stretch reads KMSKS. Lys-273 lines the ATP pocket.

The protein belongs to the class-I aminoacyl-tRNA synthetase family. In terms of assembly, monomer. It depends on Zn(2+) as a cofactor.

Its subcellular location is the cytoplasm. The catalysed reaction is tRNA(Cys) + L-cysteine + ATP = L-cysteinyl-tRNA(Cys) + AMP + diphosphate. The polypeptide is Cysteine--tRNA ligase (Acinetobacter baumannii (strain ACICU)).